The following is a 210-amino-acid chain: Oligoribonuclease (210 aa).

The 166-residue stretch at 12 to 177 (LVWIDLEMTG…ADIVESIREL (166 aa)) folds into the Exonuclease domain. Residue Tyr-134 is part of the active site.

This sequence belongs to the oligoribonuclease family.

It localises to the cytoplasm. Functionally, 3'-to-5' exoribonuclease specific for small oligoribonucleotides. The chain is Oligoribonuclease from Corynebacterium diphtheriae (strain ATCC 700971 / NCTC 13129 / Biotype gravis).